The chain runs to 393 residues: Phosphoenolpyruvate/phosphate translocator 3, chloroplastic (393 aa).

The N-terminal 65 residues, methionine 1–arginine 65, are a transit peptide targeting the chloroplast. The next 7 membrane-spanning stretches (helical) occupy residues leucine 89–phenylalanine 109, tyrosine 124–leucine 144, alanine 164–valine 183, phenylalanine 195–leucine 217, leucine 232–tyrosine 249, isoleucine 270–phenylalanine 290, and threonine 362–tyrosine 382. In terms of domain architecture, EamA spans proline 123–serine 228.

It belongs to the TPT transporter family. PPT (TC 2.A.7.9) subfamily.

The protein resides in the plastid. The protein localises to the chloroplast membrane. Its function is as follows. Phosphoenolpyruvate/phosphate translocator that transports phosphoenolpyruvate (PEP) and dihydroxyacetone phosphate. In Oryza sativa subsp. japonica (Rice), this protein is Phosphoenolpyruvate/phosphate translocator 3, chloroplastic (PPT3).